Consider the following 348-residue polypeptide: Autophagy-related protein 27 (348 aa).

The N-terminal stretch at 1-20 is a signal peptide; it reads MYRPDLLAFLLPLLAAPVFS. At 21–274 the chain is on the lumenal side; the sequence is AETLDCGKIR…DDGGDNSSSH (254 aa). The region spanning 24–255 is the MRH domain; that stretch reads LDCGKIRADG…TWHTKYACEK (232 aa). 3 disulfide bridges follow: cysteine 26–cysteine 69, cysteine 82–cysteine 89, and cysteine 175–cysteine 253. Asparagine 61 and asparagine 84 each carry an N-linked (GlcNAc...) asparagine glycan. The span at 180–208 shows a compositional bias: basic and acidic residues; sequence EGTEGEWVSEEKYEKRADEKKDDDKKEDG. The tract at residues 180-219 is disordered; sequence EGTEGEWVSEEKYEKRADEKKDDDKKEDGGDKDEGESTLE. 2 N-linked (GlcNAc...) asparagine glycosylation sites follow: asparagine 226 and asparagine 270. A helical membrane pass occupies residues 275–295; sequence WGFFTWFVLIAFLLIAGYLIF. Residues 296 to 348 are Cytoplasmic-facing; the sequence is SSWINFTRYGARGWDLLPHSDTIRDIPYLLKDFIRRILNTVQGTGSRGGYSAV.

Belongs to the ATG27 family. Forms a complex with ATG9 and ATG23.

The protein resides in the cytoplasmic vesicle membrane. It is found in the golgi apparatus membrane. It localises to the mitochondrion membrane. Its subcellular location is the preautophagosomal structure membrane. Effector of VPS34 phosphatidylinositol 3-phosphate kinase signaling. Regulates the cytoplasm to vacuole transport (Cvt) vesicle formation. Plays a role in ATG protein retrieval from the pre-autophagosomal structure (PAS) and is especially required for autophagy-dependent cycling of ATG9. Autophagy is required for proper vegetative growth, asexual/sexual reproduction, and full virulence. Autophagy is particularly involved in the biosynthesis of deoxynivalenol (DON), an important virulence determinant. The sequence is that of Autophagy-related protein 27 from Gibberella zeae (strain ATCC MYA-4620 / CBS 123657 / FGSC 9075 / NRRL 31084 / PH-1) (Wheat head blight fungus).